Reading from the N-terminus, the 139-residue chain is Holo-[acyl-carrier-protein] synthase (139 aa).

Positions 8 and 61 each coordinate Mg(2+).

The protein belongs to the P-Pant transferase superfamily. AcpS family. The cofactor is Mg(2+).

Its subcellular location is the cytoplasm. The enzyme catalyses apo-[ACP] + CoA = holo-[ACP] + adenosine 3',5'-bisphosphate + H(+). Transfers the 4'-phosphopantetheine moiety from coenzyme A to a Ser of acyl-carrier-protein. The chain is Holo-[acyl-carrier-protein] synthase from Nitrobacter winogradskyi (strain ATCC 25391 / DSM 10237 / CIP 104748 / NCIMB 11846 / Nb-255).